A 447-amino-acid chain; its full sequence is Phosphoglucosamine mutase (447 aa).

Serine 104 acts as the Phosphoserine intermediate in catalysis. Residues serine 104, aspartate 243, aspartate 245, and aspartate 247 each contribute to the Mg(2+) site. Serine 104 is modified (phosphoserine).

It belongs to the phosphohexose mutase family. It depends on Mg(2+) as a cofactor. Post-translationally, activated by phosphorylation.

The catalysed reaction is alpha-D-glucosamine 1-phosphate = D-glucosamine 6-phosphate. In terms of biological role, catalyzes the conversion of glucosamine-6-phosphate to glucosamine-1-phosphate. The protein is Phosphoglucosamine mutase of Corynebacterium jeikeium (strain K411).